The following is a 469-amino-acid chain: Glutamine synthetase (469 aa).

The GS beta-grasp domain occupies 15–96 (NDVKFIDVRF…INFFIHDPIT (82 aa)). Residues 104–469 (PRNIAKKAEA…PHEFELYFDI (366 aa)) enclose the GS catalytic domain. 2 residues coordinate Mg(2+): E129 and E131. E205 is a binding site for ATP. Positions 210 and 218 each coordinate Mg(2+). ATP is bound at residue 221 to 223 (YKF). L-glutamate contacts are provided by residues 262–263 (NG) and G263. H267 is a binding site for Mg(2+). ATP-binding positions include 269–271 (HQS) and S271. L-glutamate-binding residues include R320, E326, and R338. Residues R338, R343, and K352 each coordinate ATP. Residue E357 coordinates Mg(2+). L-glutamate is bound at residue R359. Y397 bears the O-AMP-tyrosine mark.

Belongs to the glutamine synthetase family. In terms of assembly, oligomer of 12 subunits arranged in the form of two hexagons. Mg(2+) serves as cofactor.

The protein localises to the cytoplasm. The enzyme catalyses L-glutamate + NH4(+) + ATP = L-glutamine + ADP + phosphate + H(+). The activity of this enzyme could be controlled by adenylation under conditions of abundant glutamine. Catalyzes the ATP-dependent biosynthesis of glutamine from glutamate and ammonia. The polypeptide is Glutamine synthetase (Streptomyces filamentosus (Streptomyces roseosporus)).